The chain runs to 113 residues: Cell division topological specificity factor (113 aa).

This sequence belongs to the MinE family.

Functionally, prevents the cell division inhibition by proteins MinC and MinD at internal division sites while permitting inhibition at polar sites. This ensures cell division at the proper site by restricting the formation of a division septum at the midpoint of the long axis of the cell. In Methylobacterium radiotolerans (strain ATCC 27329 / DSM 1819 / JCM 2831 / NBRC 15690 / NCIMB 10815 / 0-1), this protein is Cell division topological specificity factor.